A 345-amino-acid polypeptide reads, in one-letter code: Flotillin-like protein FloA 1 (345 aa).

Residues 26–46 (LLLLVGVFLALFFAAVLGFFF) traverse the membrane as a helical segment.

Belongs to the flotillin-like FloA family. As to quaternary structure, homooligomerizes.

The protein resides in the cell membrane. The protein localises to the membrane raft. Its function is as follows. Found in functional membrane microdomains (FMM) that may be equivalent to eukaryotic membrane rafts. FMMs are highly dynamic and increase in number as cells age. Flotillins are thought to be important factors in membrane fluidity. This is Flotillin-like protein FloA 1 from Rhodopirellula baltica (strain DSM 10527 / NCIMB 13988 / SH1).